The chain runs to 267 residues: Orotidine 5'-phosphate decarboxylase (267 aa).

K93 serves as the catalytic Proton donor.

Belongs to the OMP decarboxylase family. Type 2 subfamily.

It carries out the reaction orotidine 5'-phosphate + H(+) = UMP + CO2. Its pathway is pyrimidine metabolism; UMP biosynthesis via de novo pathway; UMP from orotate: step 2/2. This is Orotidine 5'-phosphate decarboxylase from Herpetosiphon aurantiacus (strain ATCC 23779 / DSM 785 / 114-95).